The primary structure comprises 53 residues: Small polypeptide DEVIL 7 (53 aa).

The segment covering 1 to 16 (MREKYTKEEAVKNWEK) has biased composition (basic and acidic residues). The interval 1-28 (MREKYTKEEAVKNWEKKKNKPSSPKGVG) is disordered. Residues 22-53 (SSPKGVGEFLKKKKGRFYIIGKCITMLLCSHK) are required for DVL/RTFL small polypeptide activity. A helical membrane pass occupies residues 30–46 (FLKKKKGRFYIIGKCIT).

It belongs to the DVL/RTFL small polypeptides family.

It localises to the cell membrane. Functionally, small polypeptide acting as a regulatory molecule which coordinates cellular responses required for differentiation, growth and development, probably by restricting polar cell proliferation in lateral organs and coordinating socket cell recruitment and differentiation at trichome sites. This Arabidopsis thaliana (Mouse-ear cress) protein is Small polypeptide DEVIL 7.